The sequence spans 473 residues: Laccase-3 (473 aa).

The signal sequence occupies residues 1 to 21; the sequence is MSFSSLRRALVFLGACSSALA. 2 consecutive Plastocyanin-like domains span residues 23–148 and 160–298; these read IGPV…LVIY and VDDE…ILRY. An N-linked (GlcNAc...) asparagine glycan is attached at asparagine 75. The Cu cation site is built by histidine 85, histidine 87, histidine 130, and histidine 132. 2 disulfides stabilise this stretch: cysteine 106-cysteine 462 and cysteine 138-cysteine 221. N-linked (GlcNAc...) asparagine glycosylation is found at asparagine 226, asparagine 283, asparagine 309, asparagine 346, asparagine 350, and asparagine 374. Residues 365–444 form the Plastocyanin-like 3 domain; that stretch reads TVPVLLQILN…AGLAIVFAED (80 aa). The Cu cation site is built by histidine 410, histidine 413, histidine 415, histidine 426, cysteine 427, histidine 428, and histidine 432. The N-linked (GlcNAc...) asparagine glycan is linked to asparagine 470.

The protein belongs to the multicopper oxidase family. As to quaternary structure, homodimer. The cofactor is Cu cation.

It localises to the secreted. The enzyme catalyses 4 hydroquinone + O2 = 4 benzosemiquinone + 2 H2O. Its function is as follows. Lignin degradation and detoxification of lignin-derived products. This Trametes villosa (White-rot fungus) protein is Laccase-3 (LCC3).